A 107-amino-acid chain; its full sequence is Small ribosomal subunit protein uS17 (107 aa).

Belongs to the universal ribosomal protein uS17 family. In terms of assembly, part of the 30S ribosomal subunit.

Its function is as follows. One of the primary rRNA binding proteins, it binds specifically to the 5'-end of 16S ribosomal RNA. In Thermotoga petrophila (strain ATCC BAA-488 / DSM 13995 / JCM 10881 / RKU-1), this protein is Small ribosomal subunit protein uS17.